The sequence spans 366 residues: Holliday junction branch migration complex subunit RuvB (366 aa).

The disordered stretch occupies residues Met1–Arg50. Residues Pro13–Tyr210 form a large ATPase domain (RuvB-L) region. The span at Gly15–Ala24 shows a compositional bias: basic and acidic residues. ATP contacts are provided by residues Ile49, Arg50, Gly91, Lys94, Thr95, Thr96, Glu157–Tyr159, Arg200, Tyr210, and Arg247. Residue Thr95 coordinates Mg(2+). The interval Glu211–Gln281 is small ATPAse domain (RuvB-S). Residues Pro284–Leu366 form a head domain (RuvB-H) region. Residues Arg339 and Arg344 each coordinate DNA.

It belongs to the RuvB family. Homohexamer. Forms an RuvA(8)-RuvB(12)-Holliday junction (HJ) complex. HJ DNA is sandwiched between 2 RuvA tetramers; dsDNA enters through RuvA and exits via RuvB. An RuvB hexamer assembles on each DNA strand where it exits the tetramer. Each RuvB hexamer is contacted by two RuvA subunits (via domain III) on 2 adjacent RuvB subunits; this complex drives branch migration. In the full resolvosome a probable DNA-RuvA(4)-RuvB(12)-RuvC(2) complex forms which resolves the HJ.

The protein resides in the cytoplasm. The catalysed reaction is ATP + H2O = ADP + phosphate + H(+). Its function is as follows. The RuvA-RuvB-RuvC complex processes Holliday junction (HJ) DNA during genetic recombination and DNA repair, while the RuvA-RuvB complex plays an important role in the rescue of blocked DNA replication forks via replication fork reversal (RFR). RuvA specifically binds to HJ cruciform DNA, conferring on it an open structure. The RuvB hexamer acts as an ATP-dependent pump, pulling dsDNA into and through the RuvAB complex. RuvB forms 2 homohexamers on either side of HJ DNA bound by 1 or 2 RuvA tetramers; 4 subunits per hexamer contact DNA at a time. Coordinated motions by a converter formed by DNA-disengaged RuvB subunits stimulates ATP hydrolysis and nucleotide exchange. Immobilization of the converter enables RuvB to convert the ATP-contained energy into a lever motion, pulling 2 nucleotides of DNA out of the RuvA tetramer per ATP hydrolyzed, thus driving DNA branch migration. The RuvB motors rotate together with the DNA substrate, which together with the progressing nucleotide cycle form the mechanistic basis for DNA recombination by continuous HJ branch migration. Branch migration allows RuvC to scan DNA until it finds its consensus sequence, where it cleaves and resolves cruciform DNA. This Nostoc punctiforme (strain ATCC 29133 / PCC 73102) protein is Holliday junction branch migration complex subunit RuvB.